The following is a 319-amino-acid chain: Cobalamin biosynthesis protein CbiB (319 aa).

5 consecutive transmembrane segments (helical) span residues Val56–Ala76, Trp82–Ala102, Val153–Ala173, Val204–Cys224, and Leu296–Ser316.

The protein belongs to the CobD/CbiB family.

Its subcellular location is the cell membrane. It participates in cofactor biosynthesis; adenosylcobalamin biosynthesis. In terms of biological role, converts cobyric acid to cobinamide by the addition of aminopropanol on the F carboxylic group. However, the true cosubstrate could be (R)-1-amino-2-propanol O-2-phosphate, leading to cobinamide phosphate. In Salmonella arizonae (strain ATCC BAA-731 / CDC346-86 / RSK2980), this protein is Cobalamin biosynthesis protein CbiB.